Reading from the N-terminus, the 363-residue chain is 3-dehydroquinate synthase (363 aa).

Residues 75–80, 109–113, 133–134, Lys-146, Lys-155, and 173–176 contribute to the NAD(+) site; these read DAEEGK, GAVTD, TS, and TLDT. Zn(2+) contacts are provided by Glu-188, His-251, and His-267.

The protein belongs to the sugar phosphate cyclases superfamily. Dehydroquinate synthase family. The cofactor is Co(2+). Zn(2+) is required as a cofactor. NAD(+) serves as cofactor.

Its subcellular location is the cytoplasm. The enzyme catalyses 7-phospho-2-dehydro-3-deoxy-D-arabino-heptonate = 3-dehydroquinate + phosphate. Its pathway is metabolic intermediate biosynthesis; chorismate biosynthesis; chorismate from D-erythrose 4-phosphate and phosphoenolpyruvate: step 2/7. Catalyzes the conversion of 3-deoxy-D-arabino-heptulosonate 7-phosphate (DAHP) to dehydroquinate (DHQ). The sequence is that of 3-dehydroquinate synthase from Pseudarthrobacter chlorophenolicus (strain ATCC 700700 / DSM 12829 / CIP 107037 / JCM 12360 / KCTC 9906 / NCIMB 13794 / A6) (Arthrobacter chlorophenolicus).